The sequence spans 408 residues: Argininosuccinate synthase (408 aa).

Residues 11–19 (AYSGGLDTS) and A38 each bind ATP. Positions 91 and 96 each coordinate L-citrulline. ATP is bound at residue G121. Positions 123, 127, and 128 each coordinate L-aspartate. Residue N127 coordinates L-citrulline. Residues R131, S182, S191, E267, and Y279 each coordinate L-citrulline.

The protein belongs to the argininosuccinate synthase family. Type 1 subfamily. Homotetramer.

The protein resides in the cytoplasm. It catalyses the reaction L-citrulline + L-aspartate + ATP = 2-(N(omega)-L-arginino)succinate + AMP + diphosphate + H(+). It participates in amino-acid biosynthesis; L-arginine biosynthesis; L-arginine from L-ornithine and carbamoyl phosphate: step 2/3. This chain is Argininosuccinate synthase, found in Paracoccus denitrificans (strain Pd 1222).